An 864-amino-acid polypeptide reads, in one-letter code: Mitochondrial 15S rRNA processing factor CCM1 (864 aa).

Residues 1–76 (MYMARCGPKN…REFSNTLKER (76 aa)) constitute a mitochondrion transit peptide. PPR repeat units lie at residues 319–353 (NKQN…STKH) and 356–390 (DICT…NIKP).

It belongs to the CCM1 family. As to quaternary structure, binds to mitochondrial small subunit 15S rRNA.

Its subcellular location is the mitochondrion. Regulates mitochondrial small subunit maturation by controlling 15S rRNA 5'-end processing. Localizes to the 5' precursor of the 15S rRNA in a position that is subsequently occupied by mS47 in the mature yeast mtSSU. Uses structure and sequence-specific RNA recognition, binding to a single-stranded region of the precursor and specifically recognizing bases -6 to -1. The exchange of Ccm1 for mS47 is coupled to the irreversible removal of precursor rRNA that is accompanied by conformational changes of the mitoribosomal proteins uS5m and mS26. These conformational changes signal completion of 5'-end rRNA processing through protection of the mature 5'-end of the 15S rRNA and stabilization of mS47. The removal of the 5' precursor together with the dissociation of Ccm1 may be catalyzed by the 5'-3' exoribonuclease Pet127. Involved in the specific removal of group I introns in mitochondrial encoded transcripts. This is Mitochondrial 15S rRNA processing factor CCM1 (CCM1) from Saccharomyces cerevisiae (strain Lalvin EC1118 / Prise de mousse) (Baker's yeast).